The chain runs to 586 residues: MNVYAIFADHVREAVAALAGELPEAGALDLSRIVVEPPRDAAHGDLATNAAMVLAKDLKMKPRDLAEKIAARLAQVPNVAKVDVAGPGFINLTLDAGYWPGVLAALLRAGTDFGRSDLGGGEAVNVEYVSANPTGPMHVGHCRGAVFGDALASLLAFAGFKVTREYYINDAGAQVDVLARSAYLRYREAATGETVEIPDGLYPGDYLVPVGKTLAEVHGSEYLESPESEWLPIFRTFAIGAMMEMIRDDLQALGISFDVFFSERSLTAAGIDRVGLTIEQLRRTGEVYEGRLPPPKGAPIEDWEDREQSLFRSTAHGDDVDRPLVKSDGSYTYFAGDIAYHKDKFDRGFRRMIDVWGADHGGYVKRMQAAVKAVTAGQATLDVELCQLVRLLRNGEQVRMSKRAGSFVTLREVVDEVGRDAVRFMMLFRKNDATLDFDLAKVIEQSRENPVFYVQYAHARAQSILRNAKEQHADLPESGAIYAHAPLDRLTDEGELGLVKRLAGWPRLVEQAAHAREPHRVAFYLHEVASEFHGQWNRGKDLPHLRFIIENDRELTMARLALVHGVAAVLASGLGLLGVEAVDEMK.

Residues 131–141 (ANPTGPMHVGH) carry the 'HIGH' region motif.

The protein belongs to the class-I aminoacyl-tRNA synthetase family. As to quaternary structure, monomer.

It is found in the cytoplasm. The enzyme catalyses tRNA(Arg) + L-arginine + ATP = L-arginyl-tRNA(Arg) + AMP + diphosphate. The protein is Arginine--tRNA ligase of Azorhizobium caulinodans (strain ATCC 43989 / DSM 5975 / JCM 20966 / LMG 6465 / NBRC 14845 / NCIMB 13405 / ORS 571).